A 94-amino-acid polypeptide reads, in one-letter code: MQDPNIETLFIIVHGKVQGVGYRHATVRRAHMLGVTGWVQNMENGTVQAMVQGSPDQVDHMLEWMRRGPPAASVTELESRREDGGRRFKHFAQH.

In terms of domain architecture, Acylphosphatase-like spans 8–94 (TLFIIVHGKV…GRRFKHFAQH (87 aa)). Active-site residues include Arg23 and Asn41. Residues 69–94 (PPAASVTELESRREDGGRRFKHFAQH) form a disordered region. Positions 77-86 (LESRREDGGR) are enriched in basic and acidic residues.

Belongs to the acylphosphatase family.

The catalysed reaction is an acyl phosphate + H2O = a carboxylate + phosphate + H(+). The polypeptide is Acylphosphatase (acyP) (Bordetella avium (strain 197N)).